The primary structure comprises 224 residues: COMM domain-containing protein 5 (224 aa).

S2 carries the post-translational modification N-acetylserine. Positions 151 to 215 (HVADFRWRVD…LVLKEMADLE (65 aa)) constitute a COMM domain.

It belongs to the COMM domain-containing protein 5 family. In terms of assembly, component of the commander complex consisting of the CCC subcomplex and the retriever subcomplex. Component of the CCC (COMMD/CCDC22/CCDC93) subcomplex consisting of COMMD1, COMMD2, COMMD3, COMMD4, COMMD5, COMMD6, COMMD7, COMMD8, COMMD9, COMMD10, CCDC22 and CCDC93; within the complex forms a heterodimer with COMMD10. Interacts (via COMM domain) with COMMD1 (via COMM domain). Interacts with RELA, RELB, NFKB1/p105. Interacts with CCDC22, CCDC93, SCNN1B, CUL2, CUL3, CUL4A, CUL4B, CUL7. Highly expressed in heart, stomach, jejunum, kidney, liver, and adrenal gland. Expression was generally higher in adult organs than in fetal tissues, particularly in heart, kidney, and liver.

The protein resides in the cytoplasm. Its subcellular location is the nucleus. Its function is as follows. Scaffold protein in the commander complex that is essential for endosomal recycling of transmembrane cargos; the commander complex is composed of the CCC subcomplex and the retriever subcomplex. May modulate activity of cullin-RING E3 ubiquitin ligase (CRL) complexes. Negatively regulates cell proliferation. Negatively regulates cell cycle G2/M phase transition probably by transactivating p21/CDKN1A through the p53/TP53-independent signaling pathway. Involved in kidney proximal tubule morphogenesis. Down-regulates activation of NF-kappa-B. The polypeptide is COMM domain-containing protein 5 (COMMD5) (Homo sapiens (Human)).